We begin with the raw amino-acid sequence, 113 residues long: Hydrogenase maturation factor HypA (113 aa).

Histidine 2 contributes to the Ni(2+) binding site. 4 residues coordinate Zn(2+): cysteine 73, cysteine 76, cysteine 89, and cysteine 92.

The protein belongs to the HypA/HybF family.

Functionally, involved in the maturation of [NiFe] hydrogenases. Required for nickel insertion into the metal center of the hydrogenase. This chain is Hydrogenase maturation factor HypA, found in Albidiferax ferrireducens (strain ATCC BAA-621 / DSM 15236 / T118) (Rhodoferax ferrireducens).